The following is a 623-amino-acid chain: Glutathione import ATP-binding protein GsiA (623 aa).

ABC transporter domains lie at V15–L269 and L314–L564. ATP contacts are provided by residues G49–S56 and G357–S364.

The protein belongs to the ABC transporter superfamily. Glutathione importer (TC 3.A.1.5.11) family. The complex is composed of two ATP-binding proteins (GsiA), two transmembrane proteins (GsiC and GsiD) and a solute-binding protein (GsiB).

Its subcellular location is the cell inner membrane. The enzyme catalyses glutathione(out) + ATP + H2O = glutathione(in) + ADP + phosphate + H(+). In terms of biological role, part of the ABC transporter complex GsiABCD involved in glutathione import. Responsible for energy coupling to the transport system. This Escherichia coli O1:K1 / APEC protein is Glutathione import ATP-binding protein GsiA.